The primary structure comprises 837 residues: Ubiquitin carboxyl-terminal hydrolase A (837 aa).

A UBP-type; degenerate zinc finger spans residues 166–277 (PSAFAESIIQ…QHLTHWGLNP (112 aa)). In terms of domain architecture, USP spans 319–835 (TGIENLGNSC…LGYIYFYKRQ (517 aa)). The active-site Nucleophile is the C328. A UBA 1 domain is found at 628–669 (SFNQEVLDTLLSMDFPLVRCKKALLATGGKDAELAMNWIFEH). Positions 676–695 (DIEQTPVNNNNNNNNSSNSN) are disordered. The span at 683–695 (NNNNNNNNSSNSN) shows a compositional bias: low complexity. The 41-residue stretch at 700 to 740 (VFNSQDVDNIIGMGFTDSQAKLALKNTKGNLERAADWLFSH) folds into the UBA 2 domain. H797 serves as the catalytic Proton acceptor.

The protein belongs to the peptidase C19 family.

It carries out the reaction Thiol-dependent hydrolysis of ester, thioester, amide, peptide and isopeptide bonds formed by the C-terminal Gly of ubiquitin (a 76-residue protein attached to proteins as an intracellular targeting signal).. Functionally, required for development but not growth. The chain is Ubiquitin carboxyl-terminal hydrolase A (ubpA) from Dictyostelium discoideum (Social amoeba).